Here is a 495-residue protein sequence, read N- to C-terminus: Glutamyl-tRNA(Gln) amidotransferase subunit A (495 aa).

Residues lysine 78 and serine 158 each act as charge relay system in the active site. Serine 182 acts as the Acyl-ester intermediate in catalysis.

The protein belongs to the amidase family. GatA subfamily. Heterotrimer of A, B and C subunits.

It carries out the reaction L-glutamyl-tRNA(Gln) + L-glutamine + ATP + H2O = L-glutaminyl-tRNA(Gln) + L-glutamate + ADP + phosphate + H(+). Its function is as follows. Allows the formation of correctly charged Gln-tRNA(Gln) through the transamidation of misacylated Glu-tRNA(Gln) in organisms which lack glutaminyl-tRNA synthetase. The reaction takes place in the presence of glutamine and ATP through an activated gamma-phospho-Glu-tRNA(Gln). This Dinoroseobacter shibae (strain DSM 16493 / NCIMB 14021 / DFL 12) protein is Glutamyl-tRNA(Gln) amidotransferase subunit A.